A 149-amino-acid chain; its full sequence is Calmodulin-2 (149 aa).

Position 2 is an N-acetylalanine (Ala-2). 4 consecutive EF-hand domains span residues 8-43 (EQIA…LGQN), 44-79 (PTEA…KMKD), 81-116 (DSEE…LGEK), and 117-149 (LTDE…MTSK). Ca(2+)-binding residues include Asp-21, Asp-23, Asp-25, Thr-27, Glu-32, Asp-57, Asp-59, Asn-61, Thr-63, Glu-68, Asp-94, Asp-96, Asn-98, and Glu-105. Lys-116 carries the post-translational modification N6,N6,N6-trimethyllysine. Ca(2+) is bound by residues Asp-130, Asp-132, Asp-134, Gln-136, and Glu-141.

This sequence belongs to the calmodulin family.

Its function is as follows. Calmodulin mediates the control of a large number of enzymes, ion channels and other proteins by Ca(2+). Among the enzymes to be stimulated by the calmodulin-Ca(2+) complex are a number of protein kinases and phosphatases. This Branchiostoma lanceolatum (Common lancelet) protein is Calmodulin-2 (CAM2).